The primary structure comprises 250 residues: 2,3-bisphosphoglycerate-dependent phosphoglycerate mutase (250 aa).

Residues 8–15 (RHGESKWN), 21–22 (TG), R60, 87–90 (ERHY), K98, 114–115 (RR), and 183–184 (GN) each bind substrate. Catalysis depends on H9, which acts as the Tele-phosphohistidine intermediate. The Proton donor/acceptor role is filled by E87.

It belongs to the phosphoglycerate mutase family. BPG-dependent PGAM subfamily.

The enzyme catalyses (2R)-2-phosphoglycerate = (2R)-3-phosphoglycerate. Its pathway is carbohydrate degradation; glycolysis; pyruvate from D-glyceraldehyde 3-phosphate: step 3/5. Catalyzes the interconversion of 2-phosphoglycerate and 3-phosphoglycerate. This Borrelia recurrentis (strain A1) protein is 2,3-bisphosphoglycerate-dependent phosphoglycerate mutase.